A 465-amino-acid chain; its full sequence is ATP-dependent protease ATPase subunit HslU (465 aa).

Residues V19, 61-66 (GVGKTE), D277, E343, and R415 each bind ATP.

This sequence belongs to the ClpX chaperone family. HslU subfamily. A double ring-shaped homohexamer of HslV is capped on each side by a ring-shaped HslU homohexamer. The assembly of the HslU/HslV complex is dependent on binding of ATP.

It is found in the cytoplasm. Its function is as follows. ATPase subunit of a proteasome-like degradation complex; this subunit has chaperone activity. The binding of ATP and its subsequent hydrolysis by HslU are essential for unfolding of protein substrates subsequently hydrolyzed by HslV. HslU recognizes the N-terminal part of its protein substrates and unfolds these before they are guided to HslV for hydrolysis. This Geobacillus sp. (strain WCH70) protein is ATP-dependent protease ATPase subunit HslU.